The primary structure comprises 248 residues: Putative TrmH family tRNA/rRNA methyltransferase (248 aa).

Residues Gly-196, Ile-216, and Leu-225 each contribute to the S-adenosyl-L-methionine site.

The protein belongs to the class IV-like SAM-binding methyltransferase superfamily. RNA methyltransferase TrmH family.

This is Putative TrmH family tRNA/rRNA methyltransferase from Staphylococcus aureus (strain Mu50 / ATCC 700699).